A 558-amino-acid chain; its full sequence is Dihydroxy-acid dehydratase (558 aa).

Residue cysteine 54 coordinates [2Fe-2S] cluster. Aspartate 86 contributes to the Mg(2+) binding site. [2Fe-2S] cluster is bound at residue cysteine 127. Positions 128 and 129 each coordinate Mg(2+). Lysine 129 carries the N6-carboxylysine modification. Residue cysteine 199 participates in [2Fe-2S] cluster binding. Glutamate 448 lines the Mg(2+) pocket. The active-site Proton acceptor is the serine 474.

This sequence belongs to the IlvD/Edd family. Homodimer. It depends on [2Fe-2S] cluster as a cofactor. Mg(2+) is required as a cofactor.

The enzyme catalyses (2R)-2,3-dihydroxy-3-methylbutanoate = 3-methyl-2-oxobutanoate + H2O. It catalyses the reaction (2R,3R)-2,3-dihydroxy-3-methylpentanoate = (S)-3-methyl-2-oxopentanoate + H2O. It participates in amino-acid biosynthesis; L-isoleucine biosynthesis; L-isoleucine from 2-oxobutanoate: step 3/4. It functions in the pathway amino-acid biosynthesis; L-valine biosynthesis; L-valine from pyruvate: step 3/4. Functions in the biosynthesis of branched-chain amino acids. Catalyzes the dehydration of (2R,3R)-2,3-dihydroxy-3-methylpentanoate (2,3-dihydroxy-3-methylvalerate) into 2-oxo-3-methylpentanoate (2-oxo-3-methylvalerate) and of (2R)-2,3-dihydroxy-3-methylbutanoate (2,3-dihydroxyisovalerate) into 2-oxo-3-methylbutanoate (2-oxoisovalerate), the penultimate precursor to L-isoleucine and L-valine, respectively. The polypeptide is Dihydroxy-acid dehydratase (Acidothermus cellulolyticus (strain ATCC 43068 / DSM 8971 / 11B)).